The chain runs to 670 residues: Leucine-rich repeat-containing protein 45 (670 aa).

LRR repeat units lie at residues Thr87 to Lys108, Ser115 to Phe136, Phe145 to Met166, Ser173 to Asn194, and Thr201 to Ala223. A coiled-coil region spans residues Leu234–Gln645.

Homomer.

The protein localises to the cytoplasm. It localises to the cytoskeleton. The protein resides in the microtubule organizing center. Its subcellular location is the centrosome. Its function is as follows. Component of the proteinaceous fiber-like linker between two centrioles, required for centrosome cohesion. In Gallus gallus (Chicken), this protein is Leucine-rich repeat-containing protein 45 (LRRC45).